The chain runs to 547 residues: ATP synthase subunit alpha (547 aa).

ATP is bound at residue 173–180; the sequence is GDRQTGKT.

It belongs to the ATPase alpha/beta chains family. As to quaternary structure, F-type ATPases have 2 components, CF(1) - the catalytic core - and CF(0) - the membrane proton channel. CF(1) has five subunits: alpha(3), beta(3), gamma(1), delta(1), epsilon(1). CF(0) has three main subunits: a(1), b(2) and c(9-12). The alpha and beta chains form an alternating ring which encloses part of the gamma chain. CF(1) is attached to CF(0) by a central stalk formed by the gamma and epsilon chains, while a peripheral stalk is formed by the delta and b chains.

It localises to the cell membrane. The catalysed reaction is ATP + H2O + 4 H(+)(in) = ADP + phosphate + 5 H(+)(out). Functionally, produces ATP from ADP in the presence of a proton gradient across the membrane. The alpha chain is a regulatory subunit. The sequence is that of ATP synthase subunit alpha from Thermobifida fusca (strain YX).